The following is an 824-amino-acid chain: Leucine--tRNA ligase (824 aa).

The 'HIGH' region motif lies at 42–52; it reads PYPSGKIHMGH. Residues 581–585 carry the 'KMSKS' region motif; that stretch reads KMSKS. Lys584 lines the ATP pocket.

The protein belongs to the class-I aminoacyl-tRNA synthetase family.

Its subcellular location is the cytoplasm. It carries out the reaction tRNA(Leu) + L-leucine + ATP = L-leucyl-tRNA(Leu) + AMP + diphosphate. The protein is Leucine--tRNA ligase of Geobacter sp. (strain M21).